The primary structure comprises 205 residues: 3-demethoxyubiquinol 3-hydroxylase (205 aa).

Glutamate 54, glutamate 84, histidine 87, glutamate 136, glutamate 168, and histidine 171 together coordinate Fe cation.

Belongs to the COQ7 family. Fe cation is required as a cofactor.

Its subcellular location is the cell membrane. It carries out the reaction a 5-methoxy-2-methyl-3-(all-trans-polyprenyl)benzene-1,4-diol + AH2 + O2 = a 3-demethylubiquinol + A + H2O. The protein operates within cofactor biosynthesis; ubiquinone biosynthesis. In terms of biological role, catalyzes the hydroxylation of 2-nonaprenyl-3-methyl-6-methoxy-1,4-benzoquinol during ubiquinone biosynthesis. This Paracidovorax citrulli (strain AAC00-1) (Acidovorax citrulli) protein is 3-demethoxyubiquinol 3-hydroxylase.